A 552-amino-acid chain; its full sequence is DUF724 domain-containing protein 10 (552 aa).

The disordered stretch occupies residues 308–361 (SSLTQGSGDKTEVETQRKTFPKKTLPRNQNGSGNDSTLENENSNRKRKREENLC). Over residues 333–348 (PRNQNGSGNDSTLENE) the composition is skewed to polar residues. The region spanning 371 to 543 (ILFEKKLPVW…LEFQATASAP (173 aa)) is the DUF724 domain.

In terms of tissue distribution, expressed at low levels in leaves, stems, flowers and siliques.

Functionally, may be involved in the polar growth of plant cells via transportation of RNAs. This chain is DUF724 domain-containing protein 10, found in Arabidopsis thaliana (Mouse-ear cress).